The sequence spans 589 residues: MEAKIVKVLDSSRCEDGFGKKRKRAASYAAYVTGVSCAKLQNVPPPNGQCQIPDKRRRLEGENKLSAYENRSGKALVRYYTYFKKTGIAKRVMMYENGEWNDLPEHVICAIQNELEEKSAAIEFKLCGHSFILDFLHMQRLDMETGAKTPLAWIDNAGKCFFPEIYESDERTNYCHHKCVEDPKQNAPHDIKLRLEIDVNGGETPRLNLEECSDESGDNMMDDVPLAQRSSNEHYDEATEDSCSRKLEAAVSKWDETDAIVVSGAKLTGSEVLDKDAVKKMFAVGTASLGHVPVLDVGRFSSEIAEARLALFQKQVEITKKHRGDANVRYAWLPAKREVLSAVMMQGLGVGGAFIRKSIYGVGIHLTAADCPYFSARYCDVDENGVRYMVLCRVIMGNMELLRGDKAQFFSGGEEYDNGVDDIESPKNYIVWNINMNTHIFPEFVVRFKLSNLPNAEGNLIAKRDNSGVTLEGPKDLPPQLESNQGARGSGSANSVGSSTTRPKSPWMPFPTLFAAISHKVAENDMLLINADYQQLRDKKMTRAEFVRKLRVIVGDDLLRSTITTLQNQPKSKEIPGSIRDHEEGAGGL.

The WWE domain occupies 64-153 (KLSAYENRSG…ETGAKTPLAW (90 aa)). The region spanning 248 to 469 (EAAVSKWDET…LIAKRDNSGV (222 aa)) is the PARP catalytic domain. Disordered regions lie at residues 464–504 (RDNS…TRPK) and 569–589 (QPKS…AGGL). Polar residues predominate over residues 481-503 (LESNQGARGSGSANSVGSSTTRP). The RST domain occupies 501–572 (TRPKSPWMPF…ITTLQNQPKS (72 aa)). Residues 571–589 (KSKEIPGSIRDHEEGAGGL) are compositionally biased toward basic and acidic residues.

Interacts with the transcription factors NAC013/NTL1 and NAC046. Interacts with dehydration-responsive DREB2 proteins and a number of transcription factors belonging to several protein families. Interacts with turnip crinkle virus (TCV) movement protein P8. As to expression, expressed in young developing tissues, such as young leaves and flowers and root tips. In mature plants, expressed in vasculature of leaves and roots, and guard cells.

The protein localises to the nucleus matrix. Functionally, inactive ADP-ribosyltransferase that functions with SRO1 to regulate oxidative stress, hormonal and developmental responses. Required for embryogenesis, vegetative and reproductive development, and abiotic stress responses. May regulate several stress-responsive genes. Seems to play a larger developmental role than SRO1. Does not bind NAD in vitro. This Arabidopsis thaliana (Mouse-ear cress) protein is Inactive poly [ADP-ribose] polymerase RCD1 (RCD1).